We begin with the raw amino-acid sequence, 29 residues long: MDILALGWVSVLALFTWSIAMVVWGRNGF.

A helical transmembrane segment spans residues 3–23; the sequence is ILALGWVSVLALFTWSIAMVV.

The protein belongs to the PetN family. As to quaternary structure, the 4 large subunits of the cytochrome b6-f complex are cytochrome b6, subunit IV (17 kDa polypeptide, PetD), cytochrome f and the Rieske protein, while the 4 small subunits are PetG, PetL, PetM and PetN. The complex functions as a dimer.

It is found in the cellular thylakoid membrane. Functionally, component of the cytochrome b6-f complex, which mediates electron transfer between photosystem II (PSII) and photosystem I (PSI), cyclic electron flow around PSI, and state transitions. In Gloeothece citriformis (strain PCC 7424) (Cyanothece sp. (strain PCC 7424)), this protein is Cytochrome b6-f complex subunit 8.